The chain runs to 370 residues: UPF0284 protein PCC7424_2681 (370 aa).

It belongs to the UPF0284 family.

The polypeptide is UPF0284 protein PCC7424_2681 (Gloeothece citriformis (strain PCC 7424) (Cyanothece sp. (strain PCC 7424))).